A 675-amino-acid polypeptide reads, in one-letter code: Mitochondrial distribution and morphology protein 12 (675 aa).

The SMP-LTD domain maps to 1–675 (MSIDLNWDTV…VYPSFWTFLV (675 aa)). 5 disordered regions span residues 66–186 (LPDF…GTNH), 241–270 (GPSWIADQQQQQQQQNNMLPGGAGGGGAGG), 307–327 (GTGKPTPGPSPLTGTSTPLGT), 365–390 (TGPRHKRNPSSQSLNSVGDYSPVAPA), and 444–517 (PKQG…RFRE). The span at 78-101 (SSEESDSEEEVAYENEGEYLDDPV) shows a compositional bias: acidic residues. Residues 123-137 (NSSTGSRNGSGPNSG) show a composition bias toward low complexity. The segment covering 261 to 270 (GGAGGGGAGG) has biased composition (gly residues). Residues 317–327 (PLTGTSTPLGT) show a composition bias toward low complexity. Composition is skewed to polar residues over residues 373-382 (PSSQSLNSVG) and 454-469 (VSTLAPNSAGTSNNRA). Acidic residues predominate over residues 497–510 (EPEEDEEEEEEGEE).

Belongs to the MDM12 family. In terms of assembly, component of the ER-mitochondria encounter structure (ERMES) or MDM complex, composed of mmm-1, mdm10, mdm12 and mdm34. A mmm-1 homodimer associates with one molecule of mdm12 on each side in a pairwise head-to-tail manner, and the SMP-LTD domains of mmm-1 and mdm12 generate a continuous hydrophobic tunnel for phospholipid trafficking.

It localises to the mitochondrion outer membrane. The protein localises to the endoplasmic reticulum membrane. Its function is as follows. Component of the ERMES/MDM complex, which serves as a molecular tether to connect the endoplasmic reticulum (ER) and mitochondria. Components of this complex are involved in the control of mitochondrial shape and protein biogenesis, and function in nonvesicular lipid trafficking between the ER and mitochondria. Mdm12 is required for the interaction of the ER-resident membrane protein MMM1 and the outer mitochondrial membrane-resident beta-barrel protein mdm10. The mdm12-mmm-1 subcomplex functions in the major beta-barrel assembly pathway that is responsible for biogenesis of all mitochondrial outer membrane beta-barrel proteins, and acts in a late step after the SAM complex. The mdm10-mdm12-mmm-1 subcomplex further acts in the TOM40-specific pathway after the action of the mdm12-mmm1 complex. Essential for establishing and maintaining the structure of mitochondria and maintenance of mtDNA nucleoids. This is Mitochondrial distribution and morphology protein 12 from Neurospora crassa (strain ATCC 24698 / 74-OR23-1A / CBS 708.71 / DSM 1257 / FGSC 987).